Reading from the N-terminus, the 161-residue chain is Methylated-DNA--protein-cysteine methyltransferase (161 aa).

C128 functions as the Nucleophile; methyl group acceptor in the catalytic mechanism.

The protein belongs to the MGMT family.

It localises to the cytoplasm. The enzyme catalyses a 6-O-methyl-2'-deoxyguanosine in DNA + L-cysteinyl-[protein] = S-methyl-L-cysteinyl-[protein] + a 2'-deoxyguanosine in DNA. It catalyses the reaction a 4-O-methyl-thymidine in DNA + L-cysteinyl-[protein] = a thymidine in DNA + S-methyl-L-cysteinyl-[protein]. In terms of biological role, involved in the cellular defense against the biological effects of O6-methylguanine (O6-MeG) and O4-methylthymine (O4-MeT) in DNA. Repairs the methylated nucleobase in DNA by stoichiometrically transferring the methyl group to a cysteine residue in the enzyme. This is a suicide reaction: the enzyme is irreversibly inactivated. This is Methylated-DNA--protein-cysteine methyltransferase from Methanocaldococcus vulcanius (strain ATCC 700851 / DSM 12094 / M7) (Methanococcus vulcanius).